The sequence spans 319 residues: MKKKKIGLLVMAYGTPDSLDEVEAYYTHIRHGRKPSEEALQDLIGRYKAIGGISPLAKITKEQAHKLTDSMNNMFTEYEFNCYLGLKHTAPFIEDAVEEMKRDGIEQAISIVLAPHYSTFSIKAYNERAIRLSEEIGGPVIKPIDQWYDEPKFISYWADQIKETFTKIEDKEKAVVIFSAHSLPEKIIAAGDPYVEQLQHTADLIAAAANIQNYTIGWQSAGNTPDPWIGPDVQDLTRDLFEEYRYESFIYCPVGFVAEHLEVLYDNDYECKVVTDELNAAYFRPNMPNAQSTFIDCLATIVSRKMKEIVDKELILNNN.

Residues Y13, R30, 46 to 47 (RY), S54, and Y125 each bind Fe-coproporphyrin III. Fe(2+) is bound by residues H181 and E262.

The protein belongs to the ferrochelatase family.

It localises to the cytoplasm. It catalyses the reaction Fe-coproporphyrin III + 2 H(+) = coproporphyrin III + Fe(2+). It functions in the pathway porphyrin-containing compound metabolism; protoheme biosynthesis. Functionally, involved in coproporphyrin-dependent heme b biosynthesis. Catalyzes the insertion of ferrous iron into coproporphyrin III to form Fe-coproporphyrin III. This Bacillus anthracis protein is Coproporphyrin III ferrochelatase 2.